The sequence spans 394 residues: MSKEKFERTKPHVNVGTIGHVDHGKTTLTAAITTVLAKTYGGAARAFDQIDNAPEEKARGITINTSHVEYDTPTRHYAHVDCPGHADYVKNMITGAAQMDGAILVVAATDGPMPQTREHILLGRQVGVPYIIVFLNKCDMVDDEELLELVEMEVRELLSQYDFPGDDTPIVRGSALKALEGDAEWEAKILELAGFLDSYIPEPERAIDKPFLLPIEDVFSISGRGTVVTGRVERGIIKVGEEVEIVGIKETQKSTCTGVEMFRKLLDEGRAGENVGVLLRGIKREEIERGQVLAKPGTIKPHTKFESEVYILSKDEGGRHTPFFKGYRPQFYFRTTDVTGTIELPEGVQMVMPGDNIKMVVTLIHPIAMDDGLRFAIREGGRTVGAGVVAKVLG.

The tr-type G domain maps to 10–204 (KPHVNVGTIG…FLDSYIPEPE (195 aa)). The segment at 19-26 (GHVDHGKT) is G1. 19 to 26 (GHVDHGKT) is a binding site for GTP. Threonine 26 provides a ligand contact to Mg(2+). The tract at residues 60–64 (GITIN) is G2. The G3 stretch occupies residues 81 to 84 (DCPG). GTP contacts are provided by residues 81 to 85 (DCPGH) and 136 to 139 (NKCD). The tract at residues 136–139 (NKCD) is G4. Residues 174 to 176 (SAL) are G5.

It belongs to the TRAFAC class translation factor GTPase superfamily. Classic translation factor GTPase family. EF-Tu/EF-1A subfamily. As to quaternary structure, monomer.

It is found in the cytoplasm. The enzyme catalyses GTP + H2O = GDP + phosphate + H(+). Functionally, GTP hydrolase that promotes the GTP-dependent binding of aminoacyl-tRNA to the A-site of ribosomes during protein biosynthesis. In Shigella flexneri serotype 5b (strain 8401), this protein is Elongation factor Tu 1.